The following is a 512-amino-acid chain: Gamma-aminobutyric acid receptor subunit beta-2 (512 aa).

The signal sequence occupies residues 1-25 (MWRVRKRGYFGIWSFPLIIAAVCAQ). Topologically, residues 26 to 241 (SVNDPSNMSL…LSLSFKLKRN (216 aa)) are extracellular. Residues asparagine 32 and asparagine 104 are each glycosylated (N-linked (GlcNAc...) asparagine). Position 121 (tyrosine 121) interacts with histamine. Cysteine 160 and cysteine 174 are joined by a disulfide. Asparagine 173 carries N-linked (GlcNAc...) asparagine glycosylation. Histamine contacts are provided by residues 180-181 (SY) and threonine 226. Positions 181 and 226 each coordinate 4-aminobutanoate. The helical transmembrane segment at 242-262 (IGYFILQTYMPSILITILSWV) threads the bilayer. The Cytoplasmic portion of the chain corresponds to 263 to 272 (SFWINYDASA). The helical transmembrane segment at 273–292 (ARVALGITTVLTMTTINTHL) threads the bilayer. Residues 293–310 (RETLPKIPYVKAIDMYLM) lie on the Extracellular side of the membrane. A helical membrane pass occupies residues 311 to 331 (GCFVFVFMALLEYALVNYIFF). Residues 332–490 (GRGPQRQKKA…LTDVNAIDRW (159 aa)) lie on the Cytoplasmic side of the membrane. Residue tyrosine 441 is modified to Phosphotyrosine. Residues 491-511 (SRIFFPVVFSFFNIVYWLYYV) form a helical membrane-spanning segment. A topological domain (extracellular) is located at residue asparagine 512.

This sequence belongs to the ligand-gated ion channel (TC 1.A.9) family. Gamma-aminobutyric acid receptor (TC 1.A.9.5) subfamily. GABRB2 sub-subfamily. As to quaternary structure, heteropentamer, formed by a combination of alpha (GABRA1-6), beta (GABRB1-3), gamma (GABRG1-3), delta (GABRD), epsilon (GABRE), rho (GABRR1-3), pi (GABRP) and theta (GABRQ) chains, each subunit exhibiting distinct physiological and pharmacological properties. Interacts with UBQLN1. May interact with KIF21B. Identified in a complex of 720 kDa composed of LHFPL4, NLGN2, GABRA1, GABRB2, GABRG2 and GABRB3. Isoform 1 and isoform 2 show reduced expression in schizophrenic brain. Isoform 3 shows increased expression in schizophrenic and bipolar disorder brains while isoform 4 shows reduced expression.

The protein resides in the postsynaptic cell membrane. It localises to the cell membrane. The protein localises to the cytoplasmic vesicle membrane. The catalysed reaction is chloride(in) = chloride(out). With respect to regulation, allosterically activated by benzodiazepines. Allosterically activated by the anesthetic etomidate. Inhibited by the antagonist bicuculline. Potentiated by histamine. Its function is as follows. Beta subunit of the heteropentameric ligand-gated chloride channel gated by gamma-aminobutyric acid (GABA), a major inhibitory neurotransmitter in the brain. GABA-gated chloride channels, also named GABA(A) receptors (GABAAR), consist of five subunits arranged around a central pore and contain GABA active binding site(s) located at the alpha and beta subunit interface(s). When activated by GABA, GABAARs selectively allow the flow of chloride anions across the cell membrane down their electrochemical gradient. Chloride influx into the postsynaptic neuron following GABAAR opening decreases the neuron ability to generate a new action potential, thereby reducing nerve transmission. GABAARs containing alpha-1 and beta-2 or -3 subunits exhibit synaptogenic activity; the gamma-2 subunit being necessary but not sufficient to induce rapid synaptic contacts formation. Extrasynaptic beta-2 receptors contribute to the tonic GABAergic inhibition. Beta-containing GABAARs can simultaneously bind GABA and histamine where histamine binds at the interface of two neighboring beta subunits, which may be involved in the regulation of sleep and wakefulness. The sequence is that of Gamma-aminobutyric acid receptor subunit beta-2 from Homo sapiens (Human).